The chain runs to 161 residues: Type II secretion system protein M (161 aa).

The Cytoplasmic portion of the chain corresponds to 1–16 (MHNLLALWQQRTRRER). The chain crosses the membrane as a helical span at residues 17-36 (CLLLGMAVVLLIGLVYYTLW). The Periplasmic portion of the chain corresponds to 37–161 (QPWQNREAQW…TLVLERSDEK (125 aa)).

This sequence belongs to the GSP M family. As to quaternary structure, type II secretion system is composed of four main components: the outer membrane complex, the inner membrane complex, the cytoplasmic secretion ATPase and the periplasm-spanning pseudopilus. Forms homodimers. Interacts with PulL/GspL. Interacts with PulE/GspE and PulF/GspF.

The protein resides in the cell inner membrane. In terms of biological role, inner membrane component of the type II secretion system required for the energy-dependent secretion of extracellular factors such as proteases and toxins from the periplasm. Plays a role in the complex assembly and recruits PulL resulting in a stable complex in the inner membrane. Provides thus a link between the energy-providing PulE protein in the cytoplasm and the rest of the T2SS machinery. This chain is Type II secretion system protein M (pulM), found in Klebsiella pneumoniae.